Reading from the N-terminus, the 113-residue chain is UPF0482 protein YnfB (113 aa).

A signal peptide spans 1 to 28 (MKITLSKRIGLLAFLLPCALALSTTVHA).

It belongs to the UPF0482 family.

This Escherichia coli O127:H6 (strain E2348/69 / EPEC) protein is UPF0482 protein YnfB.